Reading from the N-terminus, the 199-residue chain is Ras-related and estrogen-regulated growth inhibitor (199 aa).

Residues 13–20 (GRAGVGKS), 60–64 (DTAGQ), and 118–121 (NKAD) each bind GTP.

It belongs to the small GTPase superfamily. Ras family. As to expression, detected in heart, brain, placenta, lung, liver, skin, kidney and pancreas. Detected in estrogen receptor-positive breast-derived cell lines, but not in estrogen receptor-negative cell lines. Expression is decreased or lost in a significant proportion of primary breast tumors with poor clinical prognosis.

The protein localises to the cytoplasm. It carries out the reaction GTP + H2O = GDP + phosphate + H(+). Functionally, binds GDP/GTP and possesses intrinsic GTPase activity. Has higher affinity for GDP than for GTP. In cell lines overexpression leads to a reduction in the rate of proliferation, colony formation and in tumorigenic potential. The sequence is that of Ras-related and estrogen-regulated growth inhibitor (RERG) from Homo sapiens (Human).